The following is a 79-amino-acid chain: Defensin-like protein 109 (79 aa).

Residues 1-24 (MDFTKKILVVFAFTIMLGISSVHC) form the signal peptide. Intrachain disulfides connect Cys41-Cys76, Cys47-Cys68, Cys54-Cys74, and Cys58-Cys75.

This sequence belongs to the DEFL family.

It localises to the secreted. The polypeptide is Defensin-like protein 109 (Arabidopsis thaliana (Mouse-ear cress)).